The primary structure comprises 257 residues: Early E1A protein (257 aa).

Disordered regions lie at residues asparagine 26 to histidine 46 and leucine 75 to isoleucine 103. Residues proline 43 to leucine 51 form an interaction with RB1 in competition with E2F1 region. Positions leucine 75–leucine 91 are enriched in low complexity. An interaction with UBE2I region spans residues glutamate 79–glutamate 144. Basic and acidic residues predominate over residues proline 94 to isoleucine 103. The short motif at proline 104–tryptophan 108 is the PXLXP motif, interaction with host ZMYND11 element. The LXCXE motif, interaction with host RB1 and TMEM173/STING signature appears at leucine 113–glutamate 117. A zinc finger spans residues cysteine 158 to cysteine 178. The interval valine 191 to proline 221 is disordered. The segment covering threonine 200–glutamate 209 has biased composition (low complexity). A PXDLS motif, CTBP-binding motif is present at residues proline 246–cysteine 250. The short motif at arginine 252–histidine 257 is the Nuclear localization signal element.

Belongs to the adenoviridae E1A protein family. In terms of assembly, interacts with host UBE2I; this interaction interferes with polySUMOylation. Interacts with host RB1; this interaction induces the aberrant dissociation of RB1-E2F1 complex thereby disrupting the activity of RB1 and activating E2F1-regulated genes. Interacts with host ATF7; the interaction enhances ATF7-mediated viral transactivation activity which requires the zinc binding domains of both proteins. Isoform early E1A 32 kDa protein and isoform early E1A 26 kDa protein interact (via N-terminus) with CUL1 and E3 ubiquitin ligase RBX1; these interactions inhibit RBX1-CUL1-dependent elongation reaction of ubiquitin chains and attenuate ubiquitination of SCF(FBXW7) target proteins. Interacts (via PXLXP motif) with host ZMYND11/BS69 (via MYND-type zinc finger); this interaction inhibits E1A mediated transactivation. Interacts with host EP300; this interaction stimulates the acetylation of RB1 by recruiting EP300 and RB1 into a multimeric-protein complex. Interacts with host CTBP1 and CTBP2; this interaction seems to potentiate viral replication. Interacts with host DCAF7. Interacts with host DYRK1A. Interacts with host KPNA4; this interaction allows E1A import into the host nucleus. Interacts with host EP400; this interaction stabilizes MYC. Interacts with host TBP protein; this interaction probably disrupts the TBP-TATA complex. Interacts (via LXCXE motif) with host TMEM173/STING; this interaction impairs the ability of TMEM173/STING to sense cytosolic DNA and promote the production of type I interferon (IFN-alpha and IFN-beta). Interacts (via C-terminus) with host ZBED1/hDREF (via C-terminus); the interaction is direct.

It is found in the host nucleus. In terms of biological role, plays a role in viral genome replication by driving entry of quiescent cells into the cell cycle. Stimulation of progression from G1 to S phase allows the virus to efficiently use the cellular DNA replicating machinery to achieve viral genome replication. E1A protein has both transforming and trans-activating activities. Induces the disassembly of the E2F1 transcription factor from RB1 by direct competition for the same binding site on RB1, with subsequent transcriptional activation of E2F1-regulated S-phase genes and of the E2 region of the adenoviral genome. Release of E2F1 leads to the ARF-mediated inhibition of MDM2 and causes TP53/p53 to accumulate because it is not targeted for degradation by MDM2-mediated ubiquitination anymore. This increase in TP53, in turn, would arrest the cell proliferation and direct its death but this effect is counteracted by the viral protein E1B-55K. Inactivation of the ability of RB1 to arrest the cell cycle is critical for cellular transformation, uncontrolled cellular growth and proliferation induced by viral infection. Interaction with RBX1 and CUL1 inhibits ubiquitination of the proteins targeted by SCF(FBXW7) ubiquitin ligase complex, and may be linked to unregulated host cell proliferation. The tumorigenesis-restraining activity of E1A may be related to the disruption of the host CtBP-CtIP complex through the CtBP binding motif. Interaction with host TMEM173/STING impairs the ability of TMEM173/STING to sense cytosolic DNA and promote the production of type I interferon (IFN-alpha and IFN-beta). Promotes the sumoylation of host ZBED1/hDREF with SUMO1. This chain is Early E1A protein, found in Human adenovirus E serotype 4 (HAdV-4).